Reading from the N-terminus, the 238-residue chain is Ribonuclease PH (238 aa).

Residues Arg-86 and 124–126 (GTR) each bind phosphate.

The protein belongs to the RNase PH family. In terms of assembly, homohexameric ring arranged as a trimer of dimers.

The enzyme catalyses tRNA(n+1) + phosphate = tRNA(n) + a ribonucleoside 5'-diphosphate. Phosphorolytic 3'-5' exoribonuclease that plays an important role in tRNA 3'-end maturation. Removes nucleotide residues following the 3'-CCA terminus of tRNAs; can also add nucleotides to the ends of RNA molecules by using nucleoside diphosphates as substrates, but this may not be physiologically important. Probably plays a role in initiation of 16S rRNA degradation (leading to ribosome degradation) during starvation. This chain is Ribonuclease PH, found in Caulobacter vibrioides (strain ATCC 19089 / CIP 103742 / CB 15) (Caulobacter crescentus).